A 200-amino-acid chain; its full sequence is Cysteine dioxygenase type 1 (200 aa).

Fe cation-binding residues include H86, H88, and H140. The 3'-(S-cysteinyl)-tyrosine (Cys-Tyr) cross-link spans 93 to 157 (CFLKMLQGNL…TEPAVSLHLY (65 aa)).

It belongs to the cysteine dioxygenase family. In terms of assembly, monomer. Fe cation serves as cofactor. The cofactor is Ni(2+). Zn(2+) is required as a cofactor. The thioether cross-link between Cys-93 and Tyr-157 plays a structural role through stabilizing the Fe(2+) ion, and prevents the production of highly damaging free hydroxyl radicals by holding the oxygen radical via hydroxyl hydrogen.

It catalyses the reaction L-cysteine + O2 = 3-sulfino-L-alanine + H(+). Its pathway is organosulfur biosynthesis; taurine biosynthesis; hypotaurine from L-cysteine: step 1/2. Its function is as follows. Catalyzes the oxidation of cysteine to cysteine sulfinic acid with addition of molecular dioxygen. The sequence is that of Cysteine dioxygenase type 1 (CDO1) from Bos taurus (Bovine).